The sequence spans 338 residues: Holliday junction branch migration complex subunit RuvB (338 aa).

A large ATPase domain (RuvB-L) region spans residues 1 to 182 (MDDRMVDQSQ…FGVHLRLEYY (182 aa)). Residues Leu-21, Arg-22, Gly-63, Lys-66, Thr-67, Thr-68, 129–131 (EDF), Arg-172, Tyr-182, and Arg-219 each bind ATP. Thr-67 provides a ligand contact to Mg(2+). The segment at 183–253 (KESELKDIII…TTKRALQLLQ (71 aa)) is small ATPAse domain (RuvB-S). The head domain (RuvB-H) stretch occupies residues 256–338 (DYGLDYIDHK…KNGKRDNFEY (83 aa)). DNA-binding residues include Arg-292, Arg-311, and Arg-316.

It belongs to the RuvB family. In terms of assembly, homohexamer. Forms an RuvA(8)-RuvB(12)-Holliday junction (HJ) complex. HJ DNA is sandwiched between 2 RuvA tetramers; dsDNA enters through RuvA and exits via RuvB. An RuvB hexamer assembles on each DNA strand where it exits the tetramer. Each RuvB hexamer is contacted by two RuvA subunits (via domain III) on 2 adjacent RuvB subunits; this complex drives branch migration. In the full resolvosome a probable DNA-RuvA(4)-RuvB(12)-RuvC(2) complex forms which resolves the HJ.

It is found in the cytoplasm. The enzyme catalyses ATP + H2O = ADP + phosphate + H(+). Functionally, the RuvA-RuvB-RuvC complex processes Holliday junction (HJ) DNA during genetic recombination and DNA repair, while the RuvA-RuvB complex plays an important role in the rescue of blocked DNA replication forks via replication fork reversal (RFR). RuvA specifically binds to HJ cruciform DNA, conferring on it an open structure. The RuvB hexamer acts as an ATP-dependent pump, pulling dsDNA into and through the RuvAB complex. RuvB forms 2 homohexamers on either side of HJ DNA bound by 1 or 2 RuvA tetramers; 4 subunits per hexamer contact DNA at a time. Coordinated motions by a converter formed by DNA-disengaged RuvB subunits stimulates ATP hydrolysis and nucleotide exchange. Immobilization of the converter enables RuvB to convert the ATP-contained energy into a lever motion, pulling 2 nucleotides of DNA out of the RuvA tetramer per ATP hydrolyzed, thus driving DNA branch migration. The RuvB motors rotate together with the DNA substrate, which together with the progressing nucleotide cycle form the mechanistic basis for DNA recombination by continuous HJ branch migration. Branch migration allows RuvC to scan DNA until it finds its consensus sequence, where it cleaves and resolves cruciform DNA. In Staphylococcus carnosus (strain TM300), this protein is Holliday junction branch migration complex subunit RuvB.